Reading from the N-terminus, the 270-residue chain is Inositol monophosphatase (270 aa).

Mg(2+)-binding residues include Glu71, Asp91, Leu93, and Asp94. Glu71 provides a ligand contact to substrate. Substrate-binding positions include 93 to 96 (LDGT), 194 to 196 (GSC), Glu213, and Asp221. A Mg(2+)-binding site is contributed by Asp221.

It belongs to the inositol monophosphatase superfamily. Requires Mg(2+) as cofactor.

It carries out the reaction a myo-inositol phosphate + H2O = myo-inositol + phosphate. The protein operates within polyol metabolism; myo-inositol biosynthesis; myo-inositol from D-glucose 6-phosphate: step 2/2. Its activity is regulated as follows. Inhibited by Li(+). Functionally, responsible for the provision of inositol required for synthesis of phosphatidylinositol and polyphosphoinositides. In Mesembryanthemum crystallinum (Common ice plant), this protein is Inositol monophosphatase (IMP1).